The sequence spans 166 residues: NAD(P)H-quinone oxidoreductase subunit I, chloroplastic (166 aa).

2 consecutive 4Fe-4S ferredoxin-type domains span residues 55–84 (GRIH…VDWK) and 95–124 (LNYS…MTEE). [4Fe-4S] cluster is bound by residues C64, C67, C70, C74, C104, C107, C110, and C114.

It belongs to the complex I 23 kDa subunit family. NDH is composed of at least 16 different subunits, 5 of which are encoded in the nucleus. [4Fe-4S] cluster is required as a cofactor.

The protein resides in the plastid. Its subcellular location is the chloroplast thylakoid membrane. The enzyme catalyses a plastoquinone + NADH + (n+1) H(+)(in) = a plastoquinol + NAD(+) + n H(+)(out). It carries out the reaction a plastoquinone + NADPH + (n+1) H(+)(in) = a plastoquinol + NADP(+) + n H(+)(out). Its function is as follows. NDH shuttles electrons from NAD(P)H:plastoquinone, via FMN and iron-sulfur (Fe-S) centers, to quinones in the photosynthetic chain and possibly in a chloroplast respiratory chain. The immediate electron acceptor for the enzyme in this species is believed to be plastoquinone. Couples the redox reaction to proton translocation, and thus conserves the redox energy in a proton gradient. This chain is NAD(P)H-quinone oxidoreductase subunit I, chloroplastic, found in Ambrosia trifida (Giant ragweed).